The following is a 521-amino-acid chain: Sphingolipid C9-methyltransferase 2 (521 aa).

The next 2 helical transmembrane spans lie at 60-80 and 85-105; these read VLIS…GGGF and FFAI…ISAI. Residues 225-226, 262-270, 288-293, and 318-319 each bind S-adenosyl-L-methionine; these read YT, MLDIGCGWG, TLGRNQ, and YR.

It belongs to the CFA/CMAS family.

The protein resides in the membrane. The enzyme catalyses a (4E,8E)-4-sphinga-4,8-dienine ceramide + S-adenosyl-L-methionine = a 9-methyl-(4E,8E)-sphinga-4,8-dienine ceramide + S-adenosyl-L-homocysteine + H(+). It functions in the pathway lipid metabolism; sphingolipid metabolism. Functionally, catalyzes methylation of the sphingoid base component of glucosylceramides (GluCers) at the C9-position. Sphingolipid C9-methylation requires 4,8-desaturated ceramides as substrates. Glucosylceramides play important roles in growth, differentiation and pathogenicity. The methyl group at the C9-position distinguishes fungal glucosylceramides from those of plants and animals and may thus play a role in host-pathogen interactions enabling the host to recognize the fungal attack and initiate specific defense responses. However, C-9 methylation of GlcCers is not essential for the sensitivity of F.graminearum to plant defensins MsDef1 and RsAFP2. This Gibberella zeae (strain ATCC MYA-4620 / CBS 123657 / FGSC 9075 / NRRL 31084 / PH-1) (Wheat head blight fungus) protein is Sphingolipid C9-methyltransferase 2.